Consider the following 227-residue polypeptide: Cytochrome c oxidase subunit 2 (227 aa).

Topologically, residues methionine 1 to serine 14 are mitochondrial intermembrane. The helical transmembrane segment at proline 15–methionine 45 threads the bilayer. Residues leucine 46–glutamine 59 lie on the Mitochondrial matrix side of the membrane. A helical transmembrane segment spans residues glutamate 60–methionine 87. Residues aspartate 88–isoleucine 227 lie on the Mitochondrial intermembrane side of the membrane. Histidine 161, cysteine 196, glutamate 198, cysteine 200, histidine 204, and methionine 207 together coordinate Cu cation. Position 198 (glutamate 198) interacts with Mg(2+). Residue tyrosine 218 is modified to Phosphotyrosine.

Belongs to the cytochrome c oxidase subunit 2 family. Component of the cytochrome c oxidase (complex IV, CIV), a multisubunit enzyme composed of 14 subunits. The complex is composed of a catalytic core of 3 subunits MT-CO1, MT-CO2 and MT-CO3, encoded in the mitochondrial DNA, and 11 supernumerary subunits COX4I, COX5A, COX5B, COX6A, COX6B, COX6C, COX7A, COX7B, COX7C, COX8 and NDUFA4, which are encoded in the nuclear genome. The complex exists as a monomer or a dimer and forms supercomplexes (SCs) in the inner mitochondrial membrane with NADH-ubiquinone oxidoreductase (complex I, CI) and ubiquinol-cytochrome c oxidoreductase (cytochrome b-c1 complex, complex III, CIII), resulting in different assemblies (supercomplex SCI(1)III(2)IV(1) and megacomplex MCI(2)III(2)IV(2)). Found in a complex with TMEM177, COA6, COX18, COX20, SCO1 and SCO2. Interacts with TMEM177 in a COX20-dependent manner. Interacts with COX20. Interacts with COX16. The cofactor is Cu cation.

It is found in the mitochondrion inner membrane. It catalyses the reaction 4 Fe(II)-[cytochrome c] + O2 + 8 H(+)(in) = 4 Fe(III)-[cytochrome c] + 2 H2O + 4 H(+)(out). Its function is as follows. Component of the cytochrome c oxidase, the last enzyme in the mitochondrial electron transport chain which drives oxidative phosphorylation. The respiratory chain contains 3 multisubunit complexes succinate dehydrogenase (complex II, CII), ubiquinol-cytochrome c oxidoreductase (cytochrome b-c1 complex, complex III, CIII) and cytochrome c oxidase (complex IV, CIV), that cooperate to transfer electrons derived from NADH and succinate to molecular oxygen, creating an electrochemical gradient over the inner membrane that drives transmembrane transport and the ATP synthase. Cytochrome c oxidase is the component of the respiratory chain that catalyzes the reduction of oxygen to water. Electrons originating from reduced cytochrome c in the intermembrane space (IMS) are transferred via the dinuclear copper A center (CU(A)) of subunit 2 and heme A of subunit 1 to the active site in subunit 1, a binuclear center (BNC) formed by heme A3 and copper B (CU(B)). The BNC reduces molecular oxygen to 2 water molecules using 4 electrons from cytochrome c in the IMS and 4 protons from the mitochondrial matrix. This is Cytochrome c oxidase subunit 2 (MT-CO2) from Rhabdomys pumilio (Four-striped grass mouse).